Consider the following 461-residue polypeptide: D-phenylhydantoinase (461 aa).

3 residues coordinate a divalent metal cation: His-59, His-61, and Lys-151. At Lys-151 the chain carries N6-carboxylysine. Tyr-156 is a binding site for substrate. A divalent metal cation is bound by residues His-182 and His-239. Position 286 (Ser-286) interacts with substrate. Asp-313 is an a divalent metal cation binding site. Asn-335 contributes to the substrate binding site.

It belongs to the metallo-dependent hydrolases superfamily. Hydantoinase/dihydropyrimidinase family. In terms of assembly, homotetramer. A divalent metal cation serves as cofactor. In terms of processing, carboxylation allows a single lysine to coordinate two divalent metal cations.

The catalysed reaction is D-5-phenylhydantoin + H2O = N-carbamoyl-D-phenylglycine + H(+). Catalyzes the stereospecific hydrolysis of the cyclic amide bond of D-hydantoin derivatives with an aromatic side chains at the 5'-position. Has no activity on dihydropyrimidines. The physiological function is unknown. This Escherichia coli (strain 55989 / EAEC) protein is D-phenylhydantoinase.